The primary structure comprises 232 residues: Thiamine import ATP-binding protein ThiQ (232 aa).

The ABC transporter domain maps to 2 to 230 (LKLTDITWLY…KASASALLGI (229 aa)). 32–39 (GPSGAGKS) is an ATP binding site.

This sequence belongs to the ABC transporter superfamily. Thiamine importer (TC 3.A.1.19.1) family. The complex is composed of two ATP-binding proteins (ThiQ), two transmembrane proteins (ThiP) and a solute-binding protein (ThiB).

The protein resides in the cell inner membrane. The enzyme catalyses thiamine(out) + ATP + H2O = thiamine(in) + ADP + phosphate + H(+). Its function is as follows. Part of the ABC transporter complex ThiBPQ involved in thiamine import. Responsible for energy coupling to the transport system. This Escherichia coli (strain K12) protein is Thiamine import ATP-binding protein ThiQ.